The following is a 178-amino-acid chain: ATP synthase subunit delta (178 aa).

Belongs to the ATPase delta chain family. In terms of assembly, F-type ATPases have 2 components, F(1) - the catalytic core - and F(0) - the membrane proton channel. F(1) has five subunits: alpha(3), beta(3), gamma(1), delta(1), epsilon(1). F(0) has three main subunits: a(1), b(2) and c(10-14). The alpha and beta chains form an alternating ring which encloses part of the gamma chain. F(1) is attached to F(0) by a central stalk formed by the gamma and epsilon chains, while a peripheral stalk is formed by the delta and b chains.

The protein localises to the cell membrane. Its function is as follows. F(1)F(0) ATP synthase produces ATP from ADP in the presence of a proton or sodium gradient. F-type ATPases consist of two structural domains, F(1) containing the extramembraneous catalytic core and F(0) containing the membrane proton channel, linked together by a central stalk and a peripheral stalk. During catalysis, ATP synthesis in the catalytic domain of F(1) is coupled via a rotary mechanism of the central stalk subunits to proton translocation. This protein is part of the stalk that links CF(0) to CF(1). It either transmits conformational changes from CF(0) to CF(1) or is implicated in proton conduction. The sequence is that of ATP synthase subunit delta from Streptococcus agalactiae serotype V (strain ATCC BAA-611 / 2603 V/R).